A 293-amino-acid chain; its full sequence is Glutamyl-Q tRNA(Asp) synthetase (293 aa).

L-glutamate-binding positions include 8-12 and E44; that span reads RFAPT. Residues 11–21 carry the 'HIGH' region motif; the sequence is PTPSGYLHFGS. Zn(2+) is bound by residues C100, C102, Y114, and C118. L-glutamate is bound by residues Y171 and R189. A 'KMSKS' region motif is present at residues 227-231; sequence KLGKS. K230 is an ATP binding site.

Belongs to the class-I aminoacyl-tRNA synthetase family. GluQ subfamily. It depends on Zn(2+) as a cofactor.

Functionally, catalyzes the tRNA-independent activation of glutamate in presence of ATP and the subsequent transfer of glutamate onto a tRNA(Asp). Glutamate is transferred on the 2-amino-5-(4,5-dihydroxy-2-cyclopenten-1-yl) moiety of the queuosine in the wobble position of the QUC anticodon. This is Glutamyl-Q tRNA(Asp) synthetase from Pseudomonas aeruginosa (strain LESB58).